Reading from the N-terminus, the 589-residue chain is Phenylalanine--tRNA ligase beta subunit (589 aa).

Residues 302–379 (LPYRKEMVRA…IAYGYNNIQM (78 aa)) enclose the B5 domain. Residues Asp357, Asp363, Glu366, and Asp367 each contribute to the Mg(2+) site.

This sequence belongs to the phenylalanyl-tRNA synthetase beta subunit family. Type 2 subfamily. Heterotetramer; dimer of two heterodimers formed by FARSA and FARSB. It depends on Mg(2+) as a cofactor.

Its subcellular location is the cytoplasm. It catalyses the reaction tRNA(Phe) + L-phenylalanine + ATP = L-phenylalanyl-tRNA(Phe) + AMP + diphosphate + H(+). The chain is Phenylalanine--tRNA ligase beta subunit (Farsb) from Mus musculus (Mouse).